The primary structure comprises 162 residues: N5-carboxyaminoimidazole ribonucleotide mutase (162 aa).

Residues Ser-11, Asp-14, and Arg-41 each contribute to the substrate site.

The protein belongs to the AIR carboxylase family. Class I subfamily.

The enzyme catalyses 5-carboxyamino-1-(5-phospho-D-ribosyl)imidazole + H(+) = 5-amino-1-(5-phospho-D-ribosyl)imidazole-4-carboxylate. Its pathway is purine metabolism; IMP biosynthesis via de novo pathway; 5-amino-1-(5-phospho-D-ribosyl)imidazole-4-carboxylate from 5-amino-1-(5-phospho-D-ribosyl)imidazole (N5-CAIR route): step 2/2. Its function is as follows. Catalyzes the conversion of N5-carboxyaminoimidazole ribonucleotide (N5-CAIR) to 4-carboxy-5-aminoimidazole ribonucleotide (CAIR). This Bacillus subtilis (strain 168) protein is N5-carboxyaminoimidazole ribonucleotide mutase.